We begin with the raw amino-acid sequence, 344 residues long: 3,4-dihydroxy-2-butanone 4-phosphate synthase (344 aa).

Residues 1-202 (MILRRVTEAL…VSDLISYRLE (202 aa)) are DHBP synthase. D-ribulose 5-phosphate contacts are provided by residues 27–28 (RE), Asp-32, 139–143 (RTGHT), and Glu-163. Glu-28 is a Mg(2+) binding site. His-142 is a Mg(2+) binding site. Positions 203–344 (NESLLKMFCQ…GLKLVETISL (142 aa)) are GTP cyclohydrolase II-like.

In the N-terminal section; belongs to the DHBP synthase family. It in the C-terminal section; belongs to the GTP cyclohydrolase II family. Mg(2+) is required as a cofactor. The cofactor is Mn(2+).

The catalysed reaction is D-ribulose 5-phosphate = (2S)-2-hydroxy-3-oxobutyl phosphate + formate + H(+). The protein operates within cofactor biosynthesis; riboflavin biosynthesis; 2-hydroxy-3-oxobutyl phosphate from D-ribulose 5-phosphate: step 1/1. Functionally, catalyzes the conversion of D-ribulose 5-phosphate to formate and 3,4-dihydroxy-2-butanone 4-phosphate. The sequence is that of 3,4-dihydroxy-2-butanone 4-phosphate synthase (ribB) from Helicobacter pylori (strain J99 / ATCC 700824) (Campylobacter pylori J99).